The sequence spans 658 residues: Transmembrane 9 superfamily member 11 (658 aa).

Positions 1-23 (MRSMDRFGIWVLAILLVIQSSFG) are cleaved as a signal peptide. Topologically, residues 24–291 (FYLPGSYPHK…LKMEGSKVHW (268 aa)) are lumenal. The helical transmembrane segment at 292–312 (FSILNSLMVITFLAGIVLVIF) threads the bilayer. At 313–364 (LRTVRRDLTRYEELDKEAQAQMNEELSGWKLVVGDVFRAPSNASLLCVMVGD) the chain is on the cytoplasmic side. Residues 365–385 (GVQILGMAVVTILFAALGFMS) traverse the membrane as a helical segment. At 386–391 (PASRGT) the chain is on the lumenal side. Residues 392 to 412 (LITGMLFFYMILGIAAGYVSV) form a helical membrane-spanning segment. Over 413-432 (RLWRTIGCGEHRGWMSVAWK) the chain is Cytoplasmic. A helical transmembrane segment spans residues 433–453 (AACFFPGIAFLILTTLNFLLW). The Lumenal portion of the chain corresponds to 454 to 462 (GSHSTGAIP). The helical transmembrane segment at 463-483 (FSLFVILLLLWFCISVPLTLI) threads the bilayer. Topologically, residues 484–515 (GGYFGAKAPHIEFPVRTNQIPREIPAQKYPSW) are cytoplasmic. Residues 516-536 (LLVLGAGTLPFGTLFIELFFI) form a helical membrane-spanning segment. Residues 537-547 (MSSIWMGRVYY) are Lumenal-facing. A helical membrane pass occupies residues 548 to 568 (VFGFLFVVLILLVVVCAEVSL). Residues 569–586 (VLTYMHLCVEDYKWWWKS) are Cytoplasmic-facing. The helical transmembrane segment at 587 to 607 (FFASGSVAIYIFIYSINYLVF) threads the bilayer. Residues 608 to 619 (DLKSLSGPVSAT) are Lumenal-facing. The chain crosses the membrane as a helical span at residues 620–640 (LYLGYSLFMVLAIMLATGTVG). Topologically, residues 641 to 658 (FLSSFWFVHYLFSSVKLD) are cytoplasmic. Residues 647-652 (FVHYLF) carry the Endoplasmic reticulum export signal motif. The short motif at 656 to 658 (KLD) is the Golgi retention signal element.

This sequence belongs to the nonaspanin (TM9SF) (TC 9.A.2) family.

The protein localises to the endosome membrane. It localises to the golgi apparatus membrane. The polypeptide is Transmembrane 9 superfamily member 11 (Arabidopsis thaliana (Mouse-ear cress)).